The following is a 640-amino-acid chain: 2-hydroxyacyl-CoA lyase 2 (640 aa).

The helical transmembrane segment at 2–22 threads the bilayer; the sequence is VLFLIIAAIIIGLLLWKWLDV. Residue E102 participates in thiamine diphosphate binding. The thiamine pyrophosphate binding stretch occupies residues 477–557; sequence DFVGSAAYIV…VIGIVGNDAC (81 aa). Positions 528 and 554 each coordinate Mg(2+).

This sequence belongs to the TPP enzyme family. Requires Mg(2+) as cofactor. The cofactor is thiamine diphosphate.

It is found in the endoplasmic reticulum membrane. The enzyme catalyses 2-hydroxyoctadecanoyl-CoA = heptadecanal + formyl-CoA. It carries out the reaction (2R)-hydroxyhexadecanoyl-CoA = pentadecanal + formyl-CoA. In terms of biological role, endoplasmic reticulum 2-OH acyl-CoA lyase involved in the cleavage (C1 removal) reaction in the fatty acid alpha-oxydation in a thiamine pyrophosphate (TPP)-dependent manner. In Caenorhabditis elegans, this protein is 2-hydroxyacyl-CoA lyase 2.